We begin with the raw amino-acid sequence, 423 residues long: Innexin eat-5 (423 aa).

4 helical membrane passes run 25-41, 102-122, 277-297, and 341-361; these read YYYS…TITA, PFIM…WSML, IFLF…FDSI, and HSIL…IILL.

Belongs to the pannexin family. In terms of assembly, heterooligomer of eat-5 and another innexin. As to expression, expressed in pharyngeal muscles.

It localises to the cell membrane. The protein localises to the cell junction. Its subcellular location is the gap junction. Structural component of the gap junctions. Required for synchronized pharyngeal muscle contractions. The sequence is that of Innexin eat-5 (eat-5) from Caenorhabditis elegans.